The sequence spans 383 residues: uncharacterized protein (383 aa).

Cysteine 12, cysteine 18, cysteine 21, and cysteine 88 together coordinate [4Fe-4S] cluster. Positions 219, 246, 267, and 314 each coordinate S-adenosyl-L-methionine. Cysteine 341 serves as the catalytic Nucleophile.

It belongs to the class I-like SAM-binding methyltransferase superfamily. RNA M5U methyltransferase family.

This is an uncharacterized protein from Protochlamydia amoebophila (strain UWE25).